Reading from the N-terminus, the 157-residue chain is 3-dehydroquinate dehydratase (157 aa).

Tyr-24 (proton acceptor) is an active-site residue. Positions 75, 81, and 88 each coordinate substrate. His-101 serves as the catalytic Proton donor. Substrate-binding positions include 102-103 (LS) and Arg-112.

The protein belongs to the type-II 3-dehydroquinase family. In terms of assembly, homododecamer.

The catalysed reaction is 3-dehydroquinate = 3-dehydroshikimate + H2O. It functions in the pathway metabolic intermediate biosynthesis; chorismate biosynthesis; chorismate from D-erythrose 4-phosphate and phosphoenolpyruvate: step 3/7. In terms of biological role, catalyzes a trans-dehydration via an enolate intermediate. In Brucella melitensis biotype 1 (strain ATCC 23456 / CCUG 17765 / NCTC 10094 / 16M), this protein is 3-dehydroquinate dehydratase.